Consider the following 378-residue polypeptide: Alkanesulfonate monooxygenase (378 aa).

The protein belongs to the SsuD family.

It catalyses the reaction an alkanesulfonate + FMNH2 + O2 = an aldehyde + FMN + sulfite + H2O + 2 H(+). In terms of biological role, catalyzes the desulfonation of aliphatic sulfonates. The protein is Alkanesulfonate monooxygenase of Bacillus velezensis (strain DSM 23117 / BGSC 10A6 / LMG 26770 / FZB42) (Bacillus amyloliquefaciens subsp. plantarum).